A 59-amino-acid polypeptide reads, in one-letter code: Large ribosomal subunit protein bL32 (59 aa).

The tract at residues 1–59 is disordered; sequence MAVQQNKKSPSKRGMHRSHDHLSVAPLAVEPTTGETHLRHHVSPNGYYRGRKVIKTKND. 2 stretches are compositionally biased toward basic residues: residues 9–19 and 49–59; these read SPSKRGMHRSH and RGRKVIKTKND.

Belongs to the bacterial ribosomal protein bL32 family.

The sequence is that of Large ribosomal subunit protein bL32 from Cupriavidus metallidurans (strain ATCC 43123 / DSM 2839 / NBRC 102507 / CH34) (Ralstonia metallidurans).